A 1254-amino-acid chain; its full sequence is Zinc finger protein BRUTUS (1254 aa).

The disordered stretch occupies residues 1-40; it reads MATPLPDFETARGGGAVASSSTTVLPSSVSSSSSSSRPLP. Over residues 19–40 the composition is skewed to low complexity; sequence SSSTTVLPSSVSSSSSSSRPLP. A helical membrane pass occupies residues 201-221; that stretch reads FLCSIPVNMLAVFLPWISSSI. A disordered region spans residues 893 to 913; it reads GSPDSSSTETSKPSPQKDNDH. The span at 895 to 906 shows a compositional bias: polar residues; that stretch reads PDSSSTETSKPS. Residues 999–1068 form a CHY-type zinc finger; sequence PEKQIYGCEH…PICTTPSCDG (70 aa). Zn(2+)-binding residues include Cys1006, His1008, Cys1019, Cys1020, Cys1026, Cys1029, His1030, His1036, Cys1048, Cys1051, Cys1061, Cys1066, Cys1076, Cys1079, His1090, Cys1091, Cys1094, Cys1097, His1109, Cys1110, Cys1113, Cys1116, His1124, and Cys1126. Residues 1071–1134 form a CTCHY-type zinc finger; the sequence is MAKHYCSICK…KCLEKSLETN (64 aa). Residues 1135–1176 form an RING-type; atypical zinc finger; that stretch reads CPICCEFLFTSSEAVRALPCGHYMHSACFQAYTCSHYTCPIC.

Interacts with the PYEL proteins bHLH115, bHLH104 and ILR3 in the nucleus. Binds zinc and iron ions. Expressed in cotyledons of seedlings, young leaves, developing and mature embryos, and other reproductive tissues including floral vasculature, funiculus, septum, and gynoecium valves.

The protein localises to the membrane. The protein resides in the nucleus. The protein operates within protein modification; protein ubiquitination. Functionally, essential protein. Negatively regulates the response to iron deficiency and thus contributes to iron homeostasis. Exhibits E3 ubiquitin-protein ligase activity in vitro. Plays a role in root growth, rhizosphere acidification, and iron reductase activity in response to iron deprivation. Facilitates 26S proteasome-mediated degradation of PYEL proteins in the absence of iron. The protein is Zinc finger protein BRUTUS of Arabidopsis thaliana (Mouse-ear cress).